We begin with the raw amino-acid sequence, 63 residues long: DNA-directed RNA polymerase 7 kDa subunit (63 aa).

It belongs to the poxviridae DNA-directed RNA polymerase 7 kDa subunit family. In terms of assembly, the DNA-dependent RNA polymerase used for intermediate and late genes expression consists of eight subunits 147 kDa, 133 kDa, 35 kDa, 30 kDa, 22 kDa, 19 kDa, 18 kDa and 7 kDa totalling more than 500 kDa in mass. The same holoenzyme, with the addition of the transcription-specificity factor RAP94, is used for early gene expression.

Its subcellular location is the virion. It carries out the reaction RNA(n) + a ribonucleoside 5'-triphosphate = RNA(n+1) + diphosphate. In terms of biological role, part of the DNA-dependent RNA polymerase which catalyzes the transcription of viral DNA into RNA using the four ribonucleoside triphosphates as substrates. Responsible for the transcription of early, intermediate and late genes. DNA-dependent RNA polymerase associates with the early transcription factor (ETF) thereby allowing the early genes transcription. Late transcription, and probably also intermediate transcription, require newly synthesized RNA polymerase. This is DNA-directed RNA polymerase 7 kDa subunit (RPO7) from Molluscum contagiosum virus subtype 1 (MOCV).